The sequence spans 386 residues: Ribosomal RNA small subunit methyltransferase H (386 aa).

S-adenosyl-L-methionine is bound by residues 97 to 99 (GGH), Asp-116, Tyr-143, Asp-167, and Gln-174.

It belongs to the methyltransferase superfamily. RsmH family.

It is found in the cytoplasm. It carries out the reaction cytidine(1402) in 16S rRNA + S-adenosyl-L-methionine = N(4)-methylcytidine(1402) in 16S rRNA + S-adenosyl-L-homocysteine + H(+). Functionally, specifically methylates the N4 position of cytidine in position 1402 (C1402) of 16S rRNA. In Mycolicibacterium paratuberculosis (strain ATCC BAA-968 / K-10) (Mycobacterium paratuberculosis), this protein is Ribosomal RNA small subunit methyltransferase H.